A 164-amino-acid chain; its full sequence is Putative 4-hydroxy-4-methyl-2-oxoglutarate aldolase (164 aa).

Substrate-binding positions include 80–83 (GGNL) and Arg102. Asp103 lines the a divalent metal cation pocket.

The protein belongs to the class II aldolase/RraA-like family. In terms of assembly, homotrimer. The cofactor is a divalent metal cation.

It catalyses the reaction 4-hydroxy-4-methyl-2-oxoglutarate = 2 pyruvate. It carries out the reaction oxaloacetate + H(+) = pyruvate + CO2. In terms of biological role, catalyzes the aldol cleavage of 4-hydroxy-4-methyl-2-oxoglutarate (HMG) into 2 molecules of pyruvate. Also contains a secondary oxaloacetate (OAA) decarboxylase activity due to the common pyruvate enolate transition state formed following C-C bond cleavage in the retro-aldol and decarboxylation reactions. In Paraburkholderia phymatum (strain DSM 17167 / CIP 108236 / LMG 21445 / STM815) (Burkholderia phymatum), this protein is Putative 4-hydroxy-4-methyl-2-oxoglutarate aldolase.